Consider the following 122-residue polypeptide: Large ribosomal subunit protein uL14 (122 aa).

Belongs to the universal ribosomal protein uL14 family. As to quaternary structure, part of the 50S ribosomal subunit. Forms a cluster with proteins L3 and L19. In the 70S ribosome, L14 and L19 interact and together make contacts with the 16S rRNA in bridges B5 and B8.

Its function is as follows. Binds to 23S rRNA. Forms part of two intersubunit bridges in the 70S ribosome. The polypeptide is Large ribosomal subunit protein uL14 (Orientia tsutsugamushi (strain Boryong) (Rickettsia tsutsugamushi)).